The sequence spans 921 residues: Respiratory burst oxidase homolog protein D (921 aa).

Residues 1-71 (MKMRRGNSSN…RSNSVAGGRG (71 aa)) form a disordered region. Over 1–376 (MKMRRGNSSN…KYFILDNWQR (376 aa)) the chain is Cytoplasmic. Phosphoserine occurs at positions 8, 9, 26, and 39. Over residues 21 to 31 (NSDTNSDTESI) the composition is skewed to polar residues. A compositionally biased stretch (basic residues) spans 44 to 53 (RPKRASKKNA). EF-hand-like stretches follow at residues 193–203 (SADSNGLLLSA) and 230–241 (NNVSGDAITKEQ). EF-hand domains are found at residues 253–288 (SFDA…SASA) and 297–332 (QAKE…APNQ). Ca(2+)-binding residues include D266, D268, D270, R272, and E277. Phosphoserine occurs at positions 339, 343, and 347. The chain crosses the membrane as a helical span at residues 377-397 (LWIMMLWLGICGGLFTYKFIQ). Over 398-461 (YKNKAAYGVM…FDDSLNFHKV (64 aa)) the chain is Extracellular. The 158-residue stretch at 415–572 (KGGAETLKFN…LFIIVYALLI (158 aa)) folds into the Ferric oxidoreductase domain. A helical transmembrane segment spans residues 462 to 482 (IASGIVVGVLLHAGAHLTCDF). Residues 483–516 (PRLIAADEDTYEPMEKYFGDQPTSYWWFVKGVEG) are Cytoplasmic-facing. A helical membrane pass occupies residues 517–537 (WTGIVMVVLMAIAFTLATPWF). Over 538–559 (RRNKLNLPNFLKKLTGFNAFWY) the chain is Extracellular. Residues 560 to 580 (THHLFIIVYALLIVHGIKLYL) traverse the membrane as a helical segment. The Cytoplasmic segment spans residues 581-588 (TKIWYQKT). The helical transmembrane segment at 589–606 (TWMYLAVPILLYASERLL) threads the bilayer. Over 607–734 (RAFRSSIKPV…PYGAPAQDYK (128 aa)) the chain is Extracellular. The 122-residue stretch at 611-732 (SSIKPVKMIK…DGPYGAPAQD (122 aa)) folds into the FAD-binding FR-type domain. A helical transmembrane segment spans residues 735–755 (KYDVVLLVGLGIGATPMISIL). The Cytoplasmic portion of the chain corresponds to 756-921 (KDIINNMKGP…TKFDFHKENF (166 aa)).

It belongs to the RBOH (TC 5.B.1.3) family. Monomer and homodimer. Interacts with BIK1 and FLS2. Interacts with PBL13. Binds to SIK1 upon flagellin perception and becomes activated by phosphorylation. In terms of processing, phosphorylated at Ser-39, Ser-343 and Ser-347 by BIK1 upon flagellin (flg22) treatment. Activated by phosphorylation at Ser-347 mediated by SIK1 and at Ser-8, Ser-9 and Ser-339 upon flagellin (e.g. flg22) perception. In terms of tissue distribution, more abundant in roots than in leaves, stems or inflorescences. Expressed in mesophyll and guard cells.

The protein resides in the membrane. Inhibited by diphenylene iodinium (DPI). Calcium-dependent NADPH oxidase that generates superoxide. Involved in the generation of reactive oxygen species (ROS) during incompatible interactions with pathogens, in response to pathogen-associated molecular pattern (PAMP)-triggered immunity (PTI) signaling and in UV-B and abscisic acid ROS-dependent signaling and via SIK1 mediated activation by phosphorylation. Might be required for ROS signal amplification during light stress. This is Respiratory burst oxidase homolog protein D from Arabidopsis thaliana (Mouse-ear cress).